The chain runs to 450 residues: Glucose-6-phosphate isomerase (450 aa).

Residue T39 is modified to Phosphothreonine. The active-site Proton donor is E291. Active-site residues include H312 and K426.

Belongs to the GPI family.

Its subcellular location is the cytoplasm. It catalyses the reaction alpha-D-glucose 6-phosphate = beta-D-fructose 6-phosphate. The protein operates within carbohydrate biosynthesis; gluconeogenesis. It participates in carbohydrate degradation; glycolysis; D-glyceraldehyde 3-phosphate and glycerone phosphate from D-glucose: step 2/4. Functionally, catalyzes the reversible isomerization of glucose-6-phosphate to fructose-6-phosphate. The protein is Glucose-6-phosphate isomerase of Bacillus mycoides (strain KBAB4) (Bacillus weihenstephanensis).